Consider the following 132-residue polypeptide: Small ribosomal subunit protein uS8 (132 aa).

The protein belongs to the universal ribosomal protein uS8 family. As to quaternary structure, part of the 30S ribosomal subunit. Contacts proteins S5 and S12.

Its function is as follows. One of the primary rRNA binding proteins, it binds directly to 16S rRNA central domain where it helps coordinate assembly of the platform of the 30S subunit. This is Small ribosomal subunit protein uS8 from Streptococcus suis (strain 98HAH33).